The chain runs to 385 residues: Odorant receptor 47a (385 aa).

At 1–33 (MDSFLQVQKSTIALLGFDLFSENREMWKRPYRA) the chain is on the cytoplasmic side. The chain crosses the membrane as a helical span at residues 34–54 (MNVFSIAAIFPFILAAVLHNW). At 55–62 (KNVLLLAD) the chain is on the extracellular side. The helical transmembrane segment at 63–83 (AMVALLITILGLFKFSMILYL) threads the bilayer. At 84–129 (RRDFKRLIDKFRLLMSNEAEQGEEYAEILNAANKQDQRMCTLFRTC) the chain is on the cytoplasmic side. Residues 130–150 (FLLAWALNSVLPLVRMGLSYW) traverse the membrane as a helical segment. Over 151–175 (LAGHAEPELPFPCLFPWNIHIIRNY) the chain is Extracellular. Residues 176–196 (VLSFIWSAFASTGVVLPAVSL) form a helical membrane-spanning segment. The Cytoplasmic portion of the chain corresponds to 197–255 (DTIFCSFTSNLCAFFKIAQYKVVRFKGGSLKESQATLNKVFALYQTSLDMCNDLNQCYQ). Residues 256–276 (PIICAQFFISSLQLCMLGYLF) traverse the membrane as a helical segment. The Extracellular portion of the chain corresponds to 277 to 284 (SITFAQTE). The chain crosses the membrane as a helical span at residues 285–305 (GVYYASFIATIIIQAYIYCYC). Topologically, residues 306 to 357 (GENLKTESASFEWAIYDSPWHESLGAGGASTSICRSLLISMMRAHRGFRITG) are cytoplasmic. A helical membrane pass occupies residues 358 to 378 (YFFEANMEAFSSIVRTAMSYI). Over 379–385 (TMLRSFS) the chain is Extracellular.

It belongs to the insect chemoreceptor superfamily. Heteromeric odorant receptor channel (TC 1.A.69) family. Or1a subfamily. Interacts with Orco. Complexes exist early in the endomembrane system in olfactory sensory neurons (OSNs), coupling these complexes to the conserved ciliary trafficking pathway. As to expression, expressed with Orco in 40 olfactory receptor neurons in a broad area across the antenna, including both anterior and posterior faces. This expression pattern matches the distribution of the small sensilla basiconica. Expression in the antenna is observed late in antennal development at 93 hours APF.

It localises to the cell membrane. Functionally, odorant receptor which mediates acceptance or avoidance behavior, depending on its substrates. The odorant receptor repertoire encodes a large collection of odor stimuli that vary widely in identity, intensity, and duration. Complexes with Orco to form odorant-sensing units, providing sensitive and prolonged odorant signaling and calcium permeability. They are necessary and sufficient to promote functional reconstitution of odor-evoked signaling in sensory neurons that normally respond only to carbon dioxide. Involved in the behavioral responses to esters. Involved in the behavioral responses to pentyl acetate. This is Odorant receptor 47a (Or47a) from Drosophila melanogaster (Fruit fly).